We begin with the raw amino-acid sequence, 2876 residues long: Nipped-B-like protein B (2876 aa).

Composition is skewed to polar residues over residues 124 to 142 (PQNS…TTIT) and 149 to 167 (YVQT…QNSP). 4 disordered regions span residues 124-197 (PQNS…PIQQ), 246-367 (NDEG…SDAE), 439-494 (RESA…AGNK), and 525-1017 (EGPV…FPNY). Residues 276–290 (GPRPPLILQSPPPYT) show a composition bias toward pro residues. Residues 439 to 457 (RESAIERERCSKEVQDKDK) show a composition bias toward basic and acidic residues. Residues 471-480 (PGAAGTAGAS) show a composition bias toward low complexity. The segment covering 481 to 490 (GTPGVGGGCN) has biased composition (gly residues). 3 stretches are compositionally biased toward basic and acidic residues: residues 556–577 (SKTD…KQRV), 586–955 (VDGR…EQRS), and 962–1005 (VKQE…HKPQ). The PxVxL motif motif lies at 1068 to 1081 (NKGAKPVVVLKKLS). Disordered stretches follow at residues 1088-1229 (MISN…EPKL) and 1724-1747 (TEKA…KDVE). Over residues 1090-1100 (SNSRSSKSSRS) the composition is skewed to low complexity. Composition is skewed to basic and acidic residues over residues 1104-1119 (RFRE…ERVK) and 1156-1183 (KDRD…DSRR). A compositionally biased stretch (basic residues) spans 1212 to 1223 (KLKKKEKQKKRK). HEAT repeat units lie at residues 1803–1841 (AQSF…VDPS), 1879–1917 (PQLT…EQPT), 1981–2020 (YDWF…HILK), 2203–2241 (VVIK…QDPG), and 2349–2387 (LIHP…KYTG). Disordered regions lie at residues 2516-2590 (EVVK…DSDL) and 2728-2774 (ALLG…GHRN). Basic residues predominate over residues 2519–2537 (KKKKKKKKKKKQKQKRGKK). The span at 2548–2563 (RSSSSSSSSSSSSSDS) shows a compositional bias: low complexity. Positions 2762–2774 (RTGDSAEASGHRN) are enriched in basic and acidic residues.

Belongs to the SCC2/Nipped-B family.

The protein resides in the nucleus. Its function is as follows. May play a structural role in chromatin. Involved in sister chromatid cohesion, possibly by facilitating the cohesin complex loading. Transcription factor, which may promote cortical neuron migration during brain development by regulating the transcription of crucial genes in this process. The chain is Nipped-B-like protein B (nipblb) from Danio rerio (Zebrafish).